The following is a 545-amino-acid chain: Threonine--tRNA ligase catalytic subunit (545 aa).

The interval 139–433 (DHRLIGEKLD…LLEHFKGKLP (295 aa)) is catalytic. Zn(2+)-binding residues include Cys-231, His-282, and His-410.

It belongs to the class-II aminoacyl-tRNA synthetase family. Homodimer. Probably interacts with its editing subunit. Requires Zn(2+) as cofactor.

Its subcellular location is the cytoplasm. The catalysed reaction is tRNA(Thr) + L-threonine + ATP = L-threonyl-tRNA(Thr) + AMP + diphosphate + H(+). Functionally, catalyzes the attachment of threonine to tRNA(Thr) in a two-step reaction: L-threonine is first activated by ATP to form Thr-AMP and then transferred to the acceptor end of tRNA(Thr). Also activates L-serine and transfers it to tRNA(Thr) but cannot deacylate incorrectly charged amino acid; unlike most archaea the editing function is found in a freestanding protein. This Saccharolobus islandicus (strain M.16.4 / Kamchatka #3) (Sulfolobus islandicus) protein is Threonine--tRNA ligase catalytic subunit.